Reading from the N-terminus, the 342-residue chain is Cytochrome c oxidase subunit 2 (342 aa).

Positions 1 to 22 (MKLWKTASRFLPLSFLTLFLTG) are cleaved as a signal peptide. Cys23 carries the N-palmitoyl cysteine lipid modification. Cys23 is lipidated: S-diacylglycerol cysteine. Topologically, residues 23–50 (CLGEENLTALDPKGPQAQWIYDNMILSI) are extracellular. The interval 23–249 (CLGEENLTAL…MSAEVEEPTE (227 aa)) is cytochrome c oxidase subunit II. The chain crosses the membrane as a helical span at residues 51–69 (IVMALVSIVVFAIFFIILA). The Cytoplasmic portion of the chain corresponds to 70-89 (KYRRKPGDDEIPKQVHGNTA). A helical transmembrane segment spans residues 90–108 (LEITWTVIPIILLVILAVP). Over 109 to 342 (TITGTFMFAD…AYLRSLKVME (234 aa)) the chain is Extracellular. His175, Cys210, Cys214, and His218 together coordinate Cu cation. The region spanning 250 to 342 (TLANQGRQVF…AYLRSLKVME (93 aa)) is the Cytochrome c domain. Heme c-binding residues include Cys264, Cys267, His268, and Met317.

Belongs to the cytochrome c oxidase subunit 2 family. The cofactor is Cu cation. It depends on heme c as a cofactor.

It is found in the cell membrane. The catalysed reaction is 4 Fe(II)-[cytochrome c] + O2 + 8 H(+)(in) = 4 Fe(III)-[cytochrome c] + 2 H2O + 4 H(+)(out). Subunits I and II form the functional core of the enzyme complex. Electrons originating in cytochrome c are transferred via heme a and Cu(A) to the binuclear center formed by heme a3 and Cu(B). The sequence is that of Cytochrome c oxidase subunit 2 (ctaC) from Alkalihalophilus pseudofirmus (strain ATCC BAA-2126 / JCM 17055 / OF4) (Bacillus pseudofirmus).